A 449-amino-acid polypeptide reads, in one-letter code: UDP-N-acetylglucosamine 1-carboxyvinyltransferase (449 aa).

51–52 serves as a coordination point for phosphoenolpyruvate; sequence KN. R121 contributes to the UDP-N-acetyl-alpha-D-glucosamine binding site. C145 acts as the Proton donor in catalysis. A 2-(S-cysteinyl)pyruvic acid O-phosphothioketal modification is found at C145. Residues 150-154, D333, and I355 each bind UDP-N-acetyl-alpha-D-glucosamine; that span reads RPVDQ.

This sequence belongs to the EPSP synthase family. MurA subfamily.

It is found in the cytoplasm. It carries out the reaction phosphoenolpyruvate + UDP-N-acetyl-alpha-D-glucosamine = UDP-N-acetyl-3-O-(1-carboxyvinyl)-alpha-D-glucosamine + phosphate. It participates in cell wall biogenesis; peptidoglycan biosynthesis. Its function is as follows. Cell wall formation. Adds enolpyruvyl to UDP-N-acetylglucosamine. The chain is UDP-N-acetylglucosamine 1-carboxyvinyltransferase from Burkholderia mallei (strain ATCC 23344).